The primary structure comprises 262 residues: Ribosomal RNA small subunit methyltransferase A (262 aa).

S-adenosyl-L-methionine-binding residues include histidine 16, leucine 18, glycine 43, glutamate 64, aspartate 89, and asparagine 109.

It belongs to the class I-like SAM-binding methyltransferase superfamily. rRNA adenine N(6)-methyltransferase family. RsmA subfamily.

The protein resides in the cytoplasm. The enzyme catalyses adenosine(1518)/adenosine(1519) in 16S rRNA + 4 S-adenosyl-L-methionine = N(6)-dimethyladenosine(1518)/N(6)-dimethyladenosine(1519) in 16S rRNA + 4 S-adenosyl-L-homocysteine + 4 H(+). Specifically dimethylates two adjacent adenosines (A1518 and A1519) in the loop of a conserved hairpin near the 3'-end of 16S rRNA in the 30S particle. May play a critical role in biogenesis of 30S subunits. The sequence is that of Ribosomal RNA small subunit methyltransferase A from Xanthomonas campestris pv. campestris (strain 8004).